The following is a 62-amino-acid chain: Large ribosomal subunit protein uL29 (62 aa).

This sequence belongs to the universal ribosomal protein uL29 family.

The sequence is that of Large ribosomal subunit protein uL29 from Laribacter hongkongensis (strain HLHK9).